Here is a 298-residue protein sequence, read N- to C-terminus: Proline-rich protein 32 (298 aa).

Residues 36–56 (CLSSKPEDDAEPWGQPQVPLR) form a disordered region.

This chain is Proline-rich protein 32 (PRR32), found in Homo sapiens (Human).